The primary structure comprises 586 residues: Zinc finger protein Eos (586 aa).

Disordered regions lie at residues 1–42 and 68–98; these read MHTP…APDF and EKEF…SANS. Residues 25–34 are compositionally biased toward basic and acidic residues; it reads QGKDNLEREL. Polar residues predominate over residues 79–98; that stretch reads SVSTPNSQHSSPSRSLSANS. A Glycyl lysine isopeptide (Lys-Gly) (interchain with G-Cter in SUMO2) cross-link involves residue K100. S105 is modified (phosphoserine). 4 consecutive C2H2-type zinc fingers follow at residues 159–181, 187–209, 215–237, and 248–271; these read LKCD…KRSH, FHCN…IKLH, FKCP…LRTH, and YKCN…ERCH. Residues 281-586 form an interaction with FOXP3 region; the sequence is AQALTGQPGD…HIVRGEHKVG (306 aa). N6-acetyllysine is present on K335. A disordered region spans residues 413–490; that stretch reads RLELPGSREA…QPPPTIVVGR (78 aa). The CTBP-binding motif PEDLG motif lies at 423–433; it reads GEGPEDLGDGG. The span at 476-485 shows a compositional bias: pro residues; it reads QGPPPQPPPT. K501 participates in a covalent cross-link: Glycyl lysine isopeptide (Lys-Gly) (interchain with G-Cter in SUMO2). 2 C2H2-type zinc fingers span residues 531 to 553 and 559 to 583; these read FKCE…MGCH and FECN…RGEH.

Belongs to the Ikaros C2H2-type zinc-finger protein family. As to quaternary structure, self-associates. Interacts with other family members; IKZF1, IKZF2, IKZF3 and IKZF5. Interacts with CTBP2, SPI1 and MITF. Interacts with FOXP3 and CTBP1. In terms of tissue distribution, expressed mainly in the brain. Up-regulated in long term cultured astrocytes. Down-regulated during osteoclast differentiation.

Its subcellular location is the nucleus. In terms of biological role, DNA-binding protein that binds to the 5'GGGAATRCC-3' Ikaros-binding sequence. Interacts with SPI1 and MITF to repress transcription of the CTSK and ACP5 promoters via recruitment of corepressors SIN3A and CTBP2. May be involved in the development of central and peripheral nervous systems. Essential for the inhibitory function of regulatory T-cells (Treg). Mediates FOXP3-mediated gene silencing in regulatory T-cells (Treg) via recruitment of corepressor CTBP1. The chain is Zinc finger protein Eos (Ikzf4) from Mus musculus (Mouse).